The following is a 54-amino-acid chain: Large ribosomal subunit protein eL37 (54 aa).

Zn(2+) is bound by residues C20, C23, C35, and C38. The C4-type zinc-finger motif lies at 20–38; that stretch reads CRRCGHHTYNVRTKRCSHC.

This sequence belongs to the eukaryotic ribosomal protein eL37 family. Requires Zn(2+) as cofactor.

Its function is as follows. Binds to the 23S rRNA. The chain is Large ribosomal subunit protein eL37 (rpl37e) from Thermoplasma volcanium (strain ATCC 51530 / DSM 4299 / JCM 9571 / NBRC 15438 / GSS1).